The primary structure comprises 538 residues: Mitochondrial distribution and morphology protein 34 (538 aa).

An SMP-LTD domain is found at 1 to 224; the sequence is MSFRFDRSVF…LPTALFNMSQ (224 aa). Disordered regions lie at residues 26–55 and 231–251; these read ALNP…RKSG and DGSR…NQPS.

It belongs to the MDM34 family. Component of the ER-mitochondria encounter structure (ERMES) or MDM complex, composed of MMM1, MDM10, MDM12 and MDM34.

The protein localises to the mitochondrion outer membrane. Component of the ERMES/MDM complex, which serves as a molecular tether to connect the endoplasmic reticulum (ER) and mitochondria. Components of this complex are involved in the control of mitochondrial shape and protein biogenesis, and function in nonvesicular lipid trafficking between the ER and mitochondria. MDM34 is required for the interaction of the ER-resident membrane protein MMM1 and the outer mitochondrial membrane-resident beta-barrel protein MDM10. This chain is Mitochondrial distribution and morphology protein 34, found in Candida glabrata (strain ATCC 2001 / BCRC 20586 / JCM 3761 / NBRC 0622 / NRRL Y-65 / CBS 138) (Yeast).